We begin with the raw amino-acid sequence, 422 residues long: tRNA(Met) cytidine acetate ligase (422 aa).

ATP contacts are provided by residues 7-20, Gly-102, Asn-172, and Arg-197; that span reads ITEYNPFHNGHLYH.

Belongs to the TmcAL family.

Its subcellular location is the cytoplasm. The enzyme catalyses cytidine(34) in elongator tRNA(Met) + acetate + ATP = N(4)-acetylcytidine(34) in elongator tRNA(Met) + AMP + diphosphate. Its function is as follows. Catalyzes the formation of N(4)-acetylcytidine (ac(4)C) at the wobble position of elongator tRNA(Met), using acetate and ATP as substrates. First activates an acetate ion to form acetyladenylate (Ac-AMP) and then transfers the acetyl group to tRNA to form ac(4)C34. The protein is tRNA(Met) cytidine acetate ligase of Halothermothrix orenii (strain H 168 / OCM 544 / DSM 9562).